Consider the following 303-residue polypeptide: MMNTINTTNSLEKDNTVTSEQLQFTGAETQSKRQGSFVSFDTQTAPKKDVKNTIKLSTSDVHVYYGESEAIKGIDLEIYENEVIAFIGPSGCGKSTFLRTLNRMNDTIDSCRVTGKVLLDNQDIYDPNLDVVLLRAQVGMVFQKPNPFPKSIFENVAYGPKLHGLARDKYDLEEIVENSLHKAGLWDEVKDRLNQPGTGLSGGQQQRLCIARTIAVSPEVILMDEPCSALDPIATAKVEELISELSTQYTIAIVTHSMQQAARVSDRTAYFHLGDLIEVNSTEKVFTQPDHQLTEAYITGRFG.

The ABC transporter domain occupies 56 to 298 (LSTSDVHVYY…PDHQLTEAYI (243 aa)). 88-95 (GPSGCGKS) contributes to the ATP binding site.

This sequence belongs to the ABC transporter superfamily. Phosphate importer (TC 3.A.1.7) family. The complex is composed of two ATP-binding proteins (PstB), two transmembrane proteins (PstC and PstA) and a solute-binding protein (PstS).

It localises to the cell inner membrane. The enzyme catalyses phosphate(out) + ATP + H2O = ADP + 2 phosphate(in) + H(+). Its function is as follows. Part of the ABC transporter complex PstSACB involved in phosphate import. Responsible for energy coupling to the transport system. The polypeptide is Phosphate import ATP-binding protein PstB (Acinetobacter baylyi (strain ATCC 33305 / BD413 / ADP1)).